The following is a 149-amino-acid chain: MEQTYVMVKPDGVQRGLVGEIISRIEKRGLKIVALRMNVISEATAKEHYSEHAAKPFFPGLVGFITSGPSVSMVVEGKDAIRVMRAINGATNPVDAAPGTVRGDFALDVGRNVVHASDSPEAAAREIAIHFKDSEIGNYSRIDEVCLYE.

The ATP site is built by Lys-9, Phe-57, Arg-85, Thr-91, Arg-102, and Asn-112. The active-site Pros-phosphohistidine intermediate is His-115.

Belongs to the NDK family. Mg(2+) is required as a cofactor.

The protein resides in the cytoplasm. The enzyme catalyses a 2'-deoxyribonucleoside 5'-diphosphate + ATP = a 2'-deoxyribonucleoside 5'-triphosphate + ADP. It catalyses the reaction a ribonucleoside 5'-diphosphate + ATP = a ribonucleoside 5'-triphosphate + ADP. In terms of biological role, major role in the synthesis of nucleoside triphosphates other than ATP. The ATP gamma phosphate is transferred to the NDP beta phosphate via a ping-pong mechanism, using a phosphorylated active-site intermediate. The sequence is that of Nucleoside diphosphate kinase from Methanosarcina barkeri (strain Fusaro / DSM 804).